The following is a 283-amino-acid chain: Pyridoxine/pyridoxal/pyridoxamine kinase (283 aa).

Substrate-binding residues include Ser23 and His59. Asp125 contacts ATP. Tyr136 provides a ligand contact to Mg(2+). ATP-binding positions include Thr157, Glu162, Thr195, 222–225 (HAHV), and Thr232. Glu162 provides a ligand contact to Mg(2+). Asp234 is a substrate binding site.

It belongs to the pyridoxine kinase family. PdxK subfamily. Homodimer. The cofactor is Mg(2+).

The enzyme catalyses pyridoxal + ATP = pyridoxal 5'-phosphate + ADP + H(+). It carries out the reaction pyridoxine + ATP = pyridoxine 5'-phosphate + ADP + H(+). The catalysed reaction is pyridoxamine + ATP = pyridoxamine 5'-phosphate + ADP + H(+). It functions in the pathway cofactor metabolism; pyridoxal 5'-phosphate salvage; pyridoxal 5'-phosphate from pyridoxal: step 1/1. The protein operates within cofactor metabolism; pyridoxal 5'-phosphate salvage; pyridoxine 5'-phosphate from pyridoxine: step 1/1. Its pathway is cofactor metabolism; pyridoxal 5'-phosphate salvage; pyridoxamine 5'-phosphate from pyridoxamine: step 1/1. B6-vitamer kinase involved in the salvage pathway of pyridoxal 5'-phosphate (PLP). Catalyzes the phosphorylation of pyridoxine (PN), pyridoxal (PL), and pyridoxamine (PM), forming their respective 5'-phosphorylated esters, i.e. PNP, PLP and PMP. The protein is Pyridoxine/pyridoxal/pyridoxamine kinase of Bordetella pertussis (strain Tohama I / ATCC BAA-589 / NCTC 13251).